The chain runs to 382 residues: Anhydro-N-acetylmuramic acid kinase (382 aa).

9 to 16 (GTSLDGID) is a binding site for ATP.

Belongs to the anhydro-N-acetylmuramic acid kinase family.

The enzyme catalyses 1,6-anhydro-N-acetyl-beta-muramate + ATP + H2O = N-acetyl-D-muramate 6-phosphate + ADP + H(+). It participates in amino-sugar metabolism; 1,6-anhydro-N-acetylmuramate degradation. The protein operates within cell wall biogenesis; peptidoglycan recycling. In terms of biological role, catalyzes the specific phosphorylation of 1,6-anhydro-N-acetylmuramic acid (anhMurNAc) with the simultaneous cleavage of the 1,6-anhydro ring, generating MurNAc-6-P. Is required for the utilization of anhMurNAc either imported from the medium or derived from its own cell wall murein, and thus plays a role in cell wall recycling. In Bacillus cereus (strain AH820), this protein is Anhydro-N-acetylmuramic acid kinase.